The sequence spans 390 residues: GTPase Obg (390 aa).

Positions 1–159 constitute an Obg domain; the sequence is MKFVDEASIL…RELLLELMLL (159 aa). Positions 127 to 147 are disordered; sequence NTRFKSSVNRTPRQKTNGTPG. Over residues 129 to 145 the composition is skewed to polar residues; that stretch reads RFKSSVNRTPRQKTNGT. The region spanning 160 to 333 is the OBG-type G domain; it reads ADVGMLGMPN…LCWDVMTFIL (174 aa). GTP-binding positions include 166 to 173, 191 to 195, 213 to 216, 283 to 286, and 314 to 316; these read GMPNAGKS, FTTLV, DIPG, NKID, and SAA. The Mg(2+) site is built by S173 and T193.

The protein belongs to the TRAFAC class OBG-HflX-like GTPase superfamily. OBG GTPase family. Monomer. Requires Mg(2+) as cofactor.

The protein localises to the cytoplasm. Functionally, an essential GTPase which binds GTP, GDP and possibly (p)ppGpp with moderate affinity, with high nucleotide exchange rates and a fairly low GTP hydrolysis rate. Plays a role in control of the cell cycle, stress response, ribosome biogenesis and in those bacteria that undergo differentiation, in morphogenesis control. The chain is GTPase Obg from Shigella sonnei (strain Ss046).